The chain runs to 418 residues: MAKRQLGLGKAAKAKKQKTETSQSTAATSQKPNETLRVELNEEADADDELAQLQALWNTYSKSDKENELMVNGIIHECDRLLRNWDEKNEALPDYFHAIYALALSELAKYKPEETSQCFQMALERLDAGLAAYPKSIDVNFAKSRVLLARIPLQYISTLEVSSQVGDYPNVSEMLDEALSVYEVAETEAEARKEYSKFNEDNLDILQALDDVLDMMDNFCKKEEEEDEEKEDDDDEEEDEEEEVIQLAENHPLYHIQATDKYNFWWRNHTLKFLTNVTKRTENTTQLQRELCTRLGQSYLQEAEVPANVYTTLKYDDDYAGLGELQGLQMEEGQKLAQESFKEALKYLKKAQDDDDPDTWVNVAEAMISLGNMYEMDSPDQEKWYDEAEKILVRANKATQGKYREILENLRGEDEGDE.

Composition is skewed to low complexity over residues 1-11 (MAKRQLGLGKA) and 21-30 (TSQSTAATSQ). Disordered stretches follow at residues 1-36 (MAKR…NETL) and 222-241 (KEEE…EDEE). Residues 224–241 (EEEDEEKEDDDDEEEDEE) show a composition bias toward acidic residues.

Belongs to the ETT1 family.

The protein resides in the nucleus. Its function is as follows. Required for correct translation termination and probably involved in regulation of hypoxic gene expression. The chain is Enhancer of translation termination 1 (ETT1) from Meyerozyma guilliermondii (strain ATCC 6260 / CBS 566 / DSM 6381 / JCM 1539 / NBRC 10279 / NRRL Y-324) (Yeast).